The following is a 422-amino-acid chain: UPF0229 protein SO_2883 (422 aa).

Residues 60–111 form a disordered region; the sequence is SEPMFHQGKGGVRDRVHPGNDQFTRGDKIDRPQGGSGGGAGKGDASDSGEGN. Residues 70 to 90 show a composition bias toward basic and acidic residues; the sequence is GVRDRVHPGNDQFTRGDKIDR.

Belongs to the UPF0229 family.

The sequence is that of UPF0229 protein SO_2883 from Shewanella oneidensis (strain ATCC 700550 / JCM 31522 / CIP 106686 / LMG 19005 / NCIMB 14063 / MR-1).